We begin with the raw amino-acid sequence, 237 residues long: Large ribosomal subunit protein uL3 (237 aa).

Disordered stretches follow at residues 133 to 155 (ASHG…DPGK) and 213 to 237 (PENA…EGAE). The segment covering 135–150 (HGNSITHRSHGSTGQR) has biased composition (polar residues). Q151 bears the N5-methylglutamine mark. Residues 220 to 237 (AGLRAGAKAEAAATEGAE) show a composition bias toward low complexity.

It belongs to the universal ribosomal protein uL3 family. As to quaternary structure, part of the 50S ribosomal subunit. Forms a cluster with proteins L14 and L19. In terms of processing, methylated by PrmB.

Functionally, one of the primary rRNA binding proteins, it binds directly near the 3'-end of the 23S rRNA, where it nucleates assembly of the 50S subunit. In Brucella canis (strain ATCC 23365 / NCTC 10854 / RM-666), this protein is Large ribosomal subunit protein uL3.